Reading from the N-terminus, the 137-residue chain is Large ribosomal subunit protein uL16 (137 aa).

It belongs to the universal ribosomal protein uL16 family. In terms of assembly, part of the 50S ribosomal subunit.

In terms of biological role, binds 23S rRNA and is also seen to make contacts with the A and possibly P site tRNAs. The sequence is that of Large ribosomal subunit protein uL16 from Rhodopseudomonas palustris (strain BisA53).